A 165-amino-acid polypeptide reads, in one-letter code: Small ribosomal subunit protein uS5 (165 aa).

An S5 DRBM domain is found at Leu10 to Val73.

This sequence belongs to the universal ribosomal protein uS5 family. Part of the 30S ribosomal subunit. Contacts proteins S4 and S8.

With S4 and S12 plays an important role in translational accuracy. Functionally, located at the back of the 30S subunit body where it stabilizes the conformation of the head with respect to the body. The polypeptide is Small ribosomal subunit protein uS5 (Clostridium novyi (strain NT)).